The sequence spans 641 residues: Tetracycline resistance protein TetQ (641 aa).

The tr-type G domain occupies 1–244 (MNIINLGILA…AITSFILPPA (244 aa)). GTP-binding positions include 10-17 (AHIDAGKT), 74-78 (DTPGH), and 128-131 (NKID).

It belongs to the TRAFAC class translation factor GTPase superfamily. Classic translation factor GTPase family. TetM/TetO subfamily.

Its function is as follows. Abolishes the inhibitory effect of tetracyclin on protein synthesis by a non-covalent modification of the ribosomes. The chain is Tetracycline resistance protein TetQ (tetQ) from Xylanibacter ruminicola (Prevotella ruminicola).